We begin with the raw amino-acid sequence, 420 residues long: UDP-N-acetylglucosamine 1-carboxyvinyltransferase (420 aa).

22–23 (KN) contacts phosphoenolpyruvate. R93 is a UDP-N-acetyl-alpha-D-glucosamine binding site. The active-site Proton donor is C117. C117 carries the post-translational modification 2-(S-cysteinyl)pyruvic acid O-phosphothioketal. D306 and I328 together coordinate UDP-N-acetyl-alpha-D-glucosamine.

It belongs to the EPSP synthase family. MurA subfamily.

It is found in the cytoplasm. The enzyme catalyses phosphoenolpyruvate + UDP-N-acetyl-alpha-D-glucosamine = UDP-N-acetyl-3-O-(1-carboxyvinyl)-alpha-D-glucosamine + phosphate. It functions in the pathway cell wall biogenesis; peptidoglycan biosynthesis. In terms of biological role, cell wall formation. Adds enolpyruvyl to UDP-N-acetylglucosamine. The chain is UDP-N-acetylglucosamine 1-carboxyvinyltransferase from Colwellia psychrerythraea (strain 34H / ATCC BAA-681) (Vibrio psychroerythus).